Here is a 190-residue protein sequence, read N- to C-terminus: Threonylcarbamoyl-AMP synthase (190 aa).

The region spanning 7 to 190 (NFVLADIVRA…ALTGKRFRQG (184 aa)) is the YrdC-like domain.

Belongs to the SUA5 family. TsaC subfamily.

It localises to the cytoplasm. The catalysed reaction is L-threonine + hydrogencarbonate + ATP = L-threonylcarbamoyladenylate + diphosphate + H2O. In terms of biological role, required for the formation of a threonylcarbamoyl group on adenosine at position 37 (t(6)A37) in tRNAs that read codons beginning with adenine. Catalyzes the conversion of L-threonine, HCO(3)(-)/CO(2) and ATP to give threonylcarbamoyl-AMP (TC-AMP) as the acyladenylate intermediate, with the release of diphosphate. This chain is Threonylcarbamoyl-AMP synthase, found in Yersinia pestis bv. Antiqua (strain Angola).